Reading from the N-terminus, the 354-residue chain is Probable protein phosphatase 2C 69 (354 aa).

The PPM-type phosphatase domain maps to 33 to 279 (SYGYASSAGK…DNITCVVVRF (247 aa)). Residues Asp69, Gly70, Asp231, and Asp270 each coordinate Mn(2+). The segment at 289–354 (HISSSSSKEA…LERNSVTDKV (66 aa)) is disordered. 2 stretches are compositionally biased toward polar residues: residues 309–328 (ISSN…PENV) and 336–348 (ASRS…LERN).

Belongs to the PP2C family. The cofactor is Mg(2+). Mn(2+) serves as cofactor.

The catalysed reaction is O-phospho-L-seryl-[protein] + H2O = L-seryl-[protein] + phosphate. The enzyme catalyses O-phospho-L-threonyl-[protein] + H2O = L-threonyl-[protein] + phosphate. This is Probable protein phosphatase 2C 69 from Arabidopsis thaliana (Mouse-ear cress).